The chain runs to 201 residues: Peptidyl-tRNA hydrolase (201 aa).

TRNA is bound at residue Y14. The Proton acceptor role is filled by H19. Residues F64, N66, and N112 each contribute to the tRNA site.

It belongs to the PTH family. As to quaternary structure, monomer.

Its subcellular location is the cytoplasm. The enzyme catalyses an N-acyl-L-alpha-aminoacyl-tRNA + H2O = an N-acyl-L-amino acid + a tRNA + H(+). Functionally, hydrolyzes ribosome-free peptidyl-tRNAs (with 1 or more amino acids incorporated), which drop off the ribosome during protein synthesis, or as a result of ribosome stalling. In terms of biological role, catalyzes the release of premature peptidyl moieties from peptidyl-tRNA molecules trapped in stalled 50S ribosomal subunits, and thus maintains levels of free tRNAs and 50S ribosomes. This is Peptidyl-tRNA hydrolase from Rhodopseudomonas palustris (strain BisA53).